A 223-amino-acid chain; its full sequence is Deoxyribose-phosphate aldolase (223 aa).

The active-site Proton donor/acceptor is aspartate 91. Lysine 153 (schiff-base intermediate with acetaldehyde) is an active-site residue. The active-site Proton donor/acceptor is lysine 182.

It belongs to the DeoC/FbaB aldolase family. DeoC type 1 subfamily.

It localises to the cytoplasm. It catalyses the reaction 2-deoxy-D-ribose 5-phosphate = D-glyceraldehyde 3-phosphate + acetaldehyde. Its pathway is carbohydrate degradation; 2-deoxy-D-ribose 1-phosphate degradation; D-glyceraldehyde 3-phosphate and acetaldehyde from 2-deoxy-alpha-D-ribose 1-phosphate: step 2/2. Its function is as follows. Catalyzes a reversible aldol reaction between acetaldehyde and D-glyceraldehyde 3-phosphate to generate 2-deoxy-D-ribose 5-phosphate. The sequence is that of Deoxyribose-phosphate aldolase from Streptococcus pyogenes serotype M2 (strain MGAS10270).